The chain runs to 108 residues: Peptidyl-prolyl cis-trans isomerase Fkbp12 (108 aa).

A disordered region spans residues 1–21 (MGVQVVPIAPGDGSTYPKNGQ). Residues 20–108 (GQKVTVHYTG…TFDVELLKVE (89 aa)) enclose the PPIase FKBP-type domain.

This sequence belongs to the FKBP-type PPIase family. FKBP1 subfamily.

Its subcellular location is the cytoplasm. It catalyses the reaction [protein]-peptidylproline (omega=180) = [protein]-peptidylproline (omega=0). In terms of biological role, PPIases accelerate the folding of proteins. It catalyzes the cis-trans isomerization of proline imidic peptide bonds in oligopeptides. Binds to ligand-free TGF beta type I receptor, from which it is released upon a ligand-induced, type II receptor mediated phosphorylation of the type I receptor. Binding is inhibitory to the signaling pathways of the TGF beta family ligands. This is Peptidyl-prolyl cis-trans isomerase Fkbp12 from Drosophila melanogaster (Fruit fly).